Here is a 416-residue protein sequence, read N- to C-terminus: ABSCISIC ACID-INSENSITIVE 5-like protein 5 (416 aa).

The disordered stretch occupies residues 1–23; sequence MDGSMNLGNEPPGDGGGGGGLTR. Positions 13 to 22 are enriched in gly residues; the sequence is GDGGGGGGLT. A phosphoserine mark is found at Ser26, Ser45, and Ser86. The residue at position 135 (Thr135) is a Phosphothreonine. Residues 300–326 form a disordered region; that stretch reads SEGIGKSNGDSSSLSPSPYMFNGGVRG. Residues 336–399 form the bZIP domain; sequence VERRQRRMIK…KNQETEMRNL (64 aa). The interval 338-357 is basic motif; it reads RRQRRMIKNRESAARSRARK. Positions 364 to 385 are leucine-zipper; the sequence is LEAEVAKLKEENDELQRKQARI. The segment at 388–416 is disordered; sequence MQKNQETEMRNLLQGGPKKKLRRTESGPW.

This sequence belongs to the bZIP family. ABI5 subfamily. In terms of assembly, DNA-binding heterodimer. Interacts with ARIA. In terms of processing, the activation by phosphorylation is induced by abscisic acid (ABA). Phosphorylated by SRK2C, SRK2D, SRK2E, SRK2F and SRK2I in vitro. In terms of tissue distribution, expressed in roots, leaves, flowers and siliques but not in seeds.

The protein resides in the nucleus. Functionally, involved in ABA and stress responses and acts as a positive component of glucose signal transduction. Functions as a transcriptional activator in the ABA-inducible expression of rd29B. Binds specifically to the ABA-responsive element (ABRE) of the rd29B gene promoter. The sequence is that of ABSCISIC ACID-INSENSITIVE 5-like protein 5 (ABF2) from Arabidopsis thaliana (Mouse-ear cress).